Consider the following 91-residue polypeptide: Small ribosomal subunit protein uS19 (91 aa).

The protein belongs to the universal ribosomal protein uS19 family.

In terms of biological role, protein S19 forms a complex with S13 that binds strongly to the 16S ribosomal RNA. The sequence is that of Small ribosomal subunit protein uS19 from Amoebophilus asiaticus (strain 5a2).